The sequence spans 266 residues: Electron transfer flavoprotein subunit beta (266 aa).

Belongs to the ETF beta-subunit/FixA family. Heterodimer of an alpha and a beta subunit. It depends on FAD as a cofactor. Requires AMP as cofactor.

Functionally, the electron transfer flavoprotein serves as a specific electron acceptor for other dehydrogenases. It transfers the electrons to the main respiratory chain via ETF-ubiquinone oxidoreductase (ETF dehydrogenase). This Mycobacterium bovis (strain ATCC BAA-935 / AF2122/97) protein is Electron transfer flavoprotein subunit beta (etfB).